We begin with the raw amino-acid sequence, 37 residues long: Large ribosomal subunit protein bL36c (37 aa).

It belongs to the bacterial ribosomal protein bL36 family.

It is found in the plastid. It localises to the chloroplast. The protein is Large ribosomal subunit protein bL36c of Welwitschia mirabilis (Tree tumbo).